The primary structure comprises 577 residues: MNIQALLSEKVRQAMIAAGAPADCEPQIRQSAKVQFGDYQANGMMAVAKKLGMAPRQLAEQVLTHLDLNGIASKVEIAGPGFINIFLDPAFLAEHVQQALASDRLGVATPEKQTIVVDYSAPNVAKEMHVGHLRSTIIGDTAVRTLEFLGHKVIRANHVGDWGTQFGMLIAWLEKQQQENAGEMELADLEGFYRDAKKHYDEDEEFAERARNYVVKLQSGDEYFREMWRKLVDITMTQNQITYDRLNVTLTRDDVMGESLYNPMLPGIVADLKAKGLAVESEGATVVFLDVFKNKEGEPMGVIIQKKDGGYLYTTTDIACAKYRYETLHADRVLYYIDSRQHQHLMQAWAIVRKAGYVPESVPLEHHMFGMMLGKDGKPFKTRAGGTVKLADLLDEALERARRLVAEKNPDMPADELEKLANAVGIGAVKYADLSKNRTTDYIFDWDNMLAFEGNTAPYMQYAYTRVLSVFRKAEINEEQLAAAPVIIREDREAQLAARLLQFEETLTVVAREGTPHVMCAYLYDLAGLFSGFYEHCPILSAENEEVRNSRLKLAQLTAKTLKLGLDTLGIETVERM.

Positions 122–132 (PNVAKEMHVGH) match the 'HIGH' region motif.

The protein belongs to the class-I aminoacyl-tRNA synthetase family. In terms of assembly, monomer.

Its subcellular location is the cytoplasm. The enzyme catalyses tRNA(Arg) + L-arginine + ATP = L-arginyl-tRNA(Arg) + AMP + diphosphate. The chain is Arginine--tRNA ligase from Shigella flexneri.